A 1091-amino-acid polypeptide reads, in one-letter code: Methionine S-methyltransferase (1091 aa).

Belongs to the class I-like SAM-binding methyltransferase superfamily. In terms of assembly, homotetramer.

Its subcellular location is the cytoplasm. The catalysed reaction is L-methionine + S-adenosyl-L-methionine = S-methyl-L-methionine + S-adenosyl-L-homocysteine. Its function is as follows. Catalyzes the S-methylmethionine (SMM) biosynthesis from adenosyl-L-homocysteine (AdoMet) and methionine. SMM biosynthesis (by MMT1) and degradation (by HMT-1, HMT-2 and HMT-3) constitute the SMM cycle in plants, which is probably required to achieve short term control of AdoMet level. Also able to catalyze the selenium-methylmethionine (SeMM) from AdoMet and selenium-methionine (SeMet). May play a role in phoem sulfur transport; such function is however not essential. The protein is Methionine S-methyltransferase (MMT1) of Zea mays (Maize).